We begin with the raw amino-acid sequence, 213 residues long: ATP synthase peripheral stalk subunit OSCP, mitochondrial (213 aa).

A mitochondrion-targeting transit peptide spans 1–23 (MAAPAVSGLSRQVRYFSTSVVRP). An SIFI-degron motif is present at residues 5–23 (AVSGLSRQVRYFSTSVVRP). 4 positions are modified to N6-acetyllysine: Lys54, Lys60, Lys70, and Lys73. Lys90 bears the N6-succinyllysine mark. N6-acetyllysine; alternate occurs at positions 158 and 162. N6-succinyllysine; alternate is present on residues Lys158 and Lys162. N6-acetyllysine occurs at positions 172, 176, and 192. Lys199 carries the post-translational modification N6-succinyllysine.

It belongs to the ATPase delta chain family. As to quaternary structure, component of the ATP synthase complex composed at least of ATP5F1A/subunit alpha, ATP5F1B/subunit beta, ATP5MC1/subunit c (homooctomer), MT-ATP6/subunit a, MT-ATP8/subunit 8, ATP5ME/subunit e, ATP5MF/subunit f, ATP5MG/subunit g, ATP5MK/subunit k, ATP5MJ/subunit j, ATP5F1C/subunit gamma, ATP5F1D/subunit delta, ATP5F1E/subunit epsilon, ATP5PF/subunit F6, ATP5PB/subunit b, ATP5PD/subunit d, ATP5PO/subunit OSCP. ATP synthase complex consists of a soluble F(1) head domain (subunits alpha(3) and beta(3)) - the catalytic core - and a membrane F(0) domain - the membrane proton channel (subunits c, a, 8, e, f, g, k and j). These two domains are linked by a central stalk (subunits gamma, delta, and epsilon) rotating inside the F1 region and a stationary peripheral stalk (subunits F6, b, d, and OSCP). Acetylation at Lys-162 decreases ATP production. Deacetylated by SIRT3. Post-translationally, in response to mitochondrial stress, the precursor protein is ubiquitinated by the SIFI complex in the cytoplasm before mitochondrial import, leading to its degradation. Within the SIFI complex, UBR4 initiates ubiquitin chain that are further elongated or branched by KCMF1.

Its subcellular location is the mitochondrion. The protein resides in the mitochondrion inner membrane. Subunit OSCP, of the mitochondrial membrane ATP synthase complex (F(1)F(0) ATP synthase or Complex V) that produces ATP from ADP in the presence of a proton gradient across the membrane which is generated by electron transport complexes of the respiratory chain. ATP synthase complex consist of a soluble F(1) head domain - the catalytic core - and a membrane F(1) domain - the membrane proton channel. These two domains are linked by a central stalk rotating inside the F(1) region and a stationary peripheral stalk. During catalysis, ATP synthesis in the catalytic domain of F(1) is coupled via a rotary mechanism of the central stalk subunits to proton translocation. In vivo, can only synthesize ATP although its ATP hydrolase activity can be activated artificially in vitro. Part of the complex F(0) domain. Part of the complex F(0) domain and the peripheric stalk, which acts as a stator to hold the catalytic alpha(3)beta(3) subcomplex and subunit a/ATP6 static relative to the rotary elements. The sequence is that of ATP synthase peripheral stalk subunit OSCP, mitochondrial from Plecturocebus moloch (Dusky titi monkey).